The sequence spans 285 residues: 2,3,4,5-tetrahydropyridine-2,6-dicarboxylate N-succinyltransferase (285 aa).

2 residues coordinate substrate: Arg111 and Asp148.

It belongs to the transferase hexapeptide repeat family. In terms of assembly, homotrimer.

It is found in the cytoplasm. The enzyme catalyses (S)-2,3,4,5-tetrahydrodipicolinate + succinyl-CoA + H2O = (S)-2-succinylamino-6-oxoheptanedioate + CoA. It functions in the pathway amino-acid biosynthesis; L-lysine biosynthesis via DAP pathway; LL-2,6-diaminopimelate from (S)-tetrahydrodipicolinate (succinylase route): step 1/3. In Rhizobium meliloti (strain 1021) (Ensifer meliloti), this protein is 2,3,4,5-tetrahydropyridine-2,6-dicarboxylate N-succinyltransferase.